The primary structure comprises 202 residues: Ion-translocating oxidoreductase complex subunit G (202 aa).

A helical membrane pass occupies residues 11 to 31 (ACLMGFFSFFSLSSVIFVKNI). Threonine 176 carries the FMN phosphoryl threonine modification.

Belongs to the RnfG family. In terms of assembly, the complex is composed of six subunits: RnfA, RnfB, RnfC, RnfD, RnfE and RnfG. It depends on FMN as a cofactor.

It is found in the cell inner membrane. In terms of biological role, part of a membrane-bound complex that couples electron transfer with translocation of ions across the membrane. The protein is Ion-translocating oxidoreductase complex subunit G of Buchnera aphidicola subsp. Schizaphis graminum (strain Sg).